A 222-amino-acid polypeptide reads, in one-letter code: MSAGSLGGRSRLDEQLERMTADFLSMQDTLAGQLRALQAAFAQGDTSVREEVERLDRDIDAANARIEGEALHLLARQSPVAHDLKLTLLILQSTPDLERAGDYAKHVARRLSALRAGTAGHPSEFAQALALLLQMATTLRAASSPMNAALAHEVRALDDQVDALYDRAVEQVLAGRPDAALADTLEASHAWRAAERLGDHLVNVAQRTERLLARPAPSDAPA.

Belongs to the PhoU family.

It localises to the cytoplasm. Functionally, not known; probably involved in phosphate transport and/or metabolism. This is an uncharacterized protein from Deinococcus radiodurans (strain ATCC 13939 / DSM 20539 / JCM 16871 / CCUG 27074 / LMG 4051 / NBRC 15346 / NCIMB 9279 / VKM B-1422 / R1).